Reading from the N-terminus, the 257-residue chain is Imidazole glycerol phosphate synthase subunit HisF (257 aa).

Active-site residues include aspartate 12 and aspartate 131.

Belongs to the HisA/HisF family. In terms of assembly, heterodimer of HisH and HisF.

The protein resides in the cytoplasm. It catalyses the reaction 5-[(5-phospho-1-deoxy-D-ribulos-1-ylimino)methylamino]-1-(5-phospho-beta-D-ribosyl)imidazole-4-carboxamide + L-glutamine = D-erythro-1-(imidazol-4-yl)glycerol 3-phosphate + 5-amino-1-(5-phospho-beta-D-ribosyl)imidazole-4-carboxamide + L-glutamate + H(+). Its pathway is amino-acid biosynthesis; L-histidine biosynthesis; L-histidine from 5-phospho-alpha-D-ribose 1-diphosphate: step 5/9. Its function is as follows. IGPS catalyzes the conversion of PRFAR and glutamine to IGP, AICAR and glutamate. The HisF subunit catalyzes the cyclization activity that produces IGP and AICAR from PRFAR using the ammonia provided by the HisH subunit. This Teredinibacter turnerae (strain ATCC 39867 / T7901) protein is Imidazole glycerol phosphate synthase subunit HisF.